The following is a 315-amino-acid chain: Methenyltetrahydromethanopterin cyclohydrolase (315 aa).

Belongs to the MCH family.

It localises to the cytoplasm. It carries out the reaction 5,10-methenyl-5,6,7,8-tetrahydromethanopterin + H2O = N(5)-formyl-5,6,7,8-tetrahydromethanopterin + H(+). Its pathway is one-carbon metabolism; methanogenesis from CO(2); 5,10-methenyl-5,6,7,8-tetrahydromethanopterin from CO(2): step 3/3. Its function is as follows. Catalyzes the reversible interconversion of 5-formyl-H(4)MPT to methenyl-H(4)MPT(+). This chain is Methenyltetrahydromethanopterin cyclohydrolase, found in Methanospirillum hungatei JF-1 (strain ATCC 27890 / DSM 864 / NBRC 100397 / JF-1).